Reading from the N-terminus, the 101-residue chain is Urease subunit beta (101 aa).

It belongs to the urease beta subunit family. Heterotrimer of UreA (gamma), UreB (beta) and UreC (alpha) subunits. Three heterotrimers associate to form the active enzyme.

Its subcellular location is the cytoplasm. The enzyme catalyses urea + 2 H2O + H(+) = hydrogencarbonate + 2 NH4(+). It functions in the pathway nitrogen metabolism; urea degradation; CO(2) and NH(3) from urea (urease route): step 1/1. The chain is Urease subunit beta from Leptothrix cholodnii (strain ATCC 51168 / LMG 8142 / SP-6) (Leptothrix discophora (strain SP-6)).